The following is a 420-amino-acid chain: Ribosome biogenesis protein WDR12 homolog (420 aa).

The tract at residues 10–92 is ubiquitin-like (UBL) domain; sequence VQVHLKTKQE…EDAIEIEYVE (83 aa). WD repeat units lie at residues 104–142, 143–185, 192–231, 250–288, 290–329, 335–375, and 379–417; these read LHDDWVSAVKASGKWILSGCYDNTLNLWTNKGKHILTIS, GHTA…NSVE, GHERGVDSVSVSPDGLRFATGSWDTMLKVWSAEQEDAAEG, GHRESVSAVQWMDASTLLTGSWDHTLKVWDLSLEGIKTE, STNKSIFDASYSKLNRLILTASADKNLRLYDPRTNQGSVV, GHNA…APLY, and GHGEKVLDIDWSNPKYIVSGGVDNTVRVFKSRKALAEDT.

Belongs to the WD repeat WDR12/YTM1 family.

It localises to the nucleus. The protein localises to the nucleolus. Its subcellular location is the nucleoplasm. Required for maturation of ribosomal RNAs and formation of the large ribosomal subunit. This Drosophila erecta (Fruit fly) protein is Ribosome biogenesis protein WDR12 homolog.